The primary structure comprises 140 residues: 3-hydroxyacyl-[acyl-carrier-protein] dehydratase FabZ (140 aa).

His47 is an active-site residue.

The protein belongs to the thioester dehydratase family. FabZ subfamily.

It localises to the cytoplasm. It carries out the reaction a (3R)-hydroxyacyl-[ACP] = a (2E)-enoyl-[ACP] + H2O. Functionally, involved in unsaturated fatty acids biosynthesis. Catalyzes the dehydration of short chain beta-hydroxyacyl-ACPs and long chain saturated and unsaturated beta-hydroxyacyl-ACPs. This Streptococcus uberis (strain ATCC BAA-854 / 0140J) protein is 3-hydroxyacyl-[acyl-carrier-protein] dehydratase FabZ.